The chain runs to 78 residues: Large ribosomal subunit protein bL28B (78 aa).

It belongs to the bacterial ribosomal protein bL28 family.

This is Large ribosomal subunit protein bL28B (rpmB2) from Streptomyces coelicolor (strain ATCC BAA-471 / A3(2) / M145).